The following is a 576-amino-acid chain: Sulfite reductase [NADPH] hemoprotein beta-component (576 aa).

Cys-435, Cys-441, Cys-480, and Cys-484 together coordinate [4Fe-4S] cluster. Residue Cys-484 coordinates siroheme.

The protein belongs to the nitrite and sulfite reductase 4Fe-4S domain family. As to quaternary structure, alpha(8)-beta(8). The alpha component is a flavoprotein, the beta component is a hemoprotein. Requires siroheme as cofactor. The cofactor is [4Fe-4S] cluster.

It catalyses the reaction hydrogen sulfide + 3 NADP(+) + 3 H2O = sulfite + 3 NADPH + 4 H(+). The protein operates within sulfur metabolism; hydrogen sulfide biosynthesis; hydrogen sulfide from sulfite (NADPH route): step 1/1. In terms of biological role, component of the sulfite reductase complex that catalyzes the 6-electron reduction of sulfite to sulfide. This is one of several activities required for the biosynthesis of L-cysteine from sulfate. This is Sulfite reductase [NADPH] hemoprotein beta-component from Yersinia pseudotuberculosis serotype IB (strain PB1/+).